The sequence spans 397 residues: S-adenosylmethionine synthase (397 aa).

Residue His-16 coordinates ATP. Asp-18 contacts Mg(2+). Glu-44 is a binding site for K(+). L-methionine contacts are provided by Glu-57 and Gln-100. Residues 100-110 (QSPDIAQGVNE) are flexible loop. Residues 175 to 177 (DAK), 242 to 243 (RF), Asp-251, 257 to 258 (RK), Ala-274, and Lys-278 each bind ATP. L-methionine is bound at residue Asp-251. Residue Lys-282 coordinates L-methionine.

Belongs to the AdoMet synthase family. Homotetramer; dimer of dimers. Mg(2+) is required as a cofactor. Requires K(+) as cofactor.

The protein localises to the cytoplasm. The enzyme catalyses L-methionine + ATP + H2O = S-adenosyl-L-methionine + phosphate + diphosphate. It functions in the pathway amino-acid biosynthesis; S-adenosyl-L-methionine biosynthesis; S-adenosyl-L-methionine from L-methionine: step 1/1. Functionally, catalyzes the formation of S-adenosylmethionine (AdoMet) from methionine and ATP. The overall synthetic reaction is composed of two sequential steps, AdoMet formation and the subsequent tripolyphosphate hydrolysis which occurs prior to release of AdoMet from the enzyme. The chain is S-adenosylmethionine synthase from Streptococcus thermophilus (strain CNRZ 1066).